Consider the following 186-residue polypeptide: MGLLDRLSGLLGLKKKEVHVLCLGLDNSGKTTIINKLKPSNAQSQDIVPTIGFSIQKFKSSSLSFTVFDMSGQGRYRNLWEHYYKEGQAIIFVIDSSDKLRMVVAKEELRTLLNHPDIKHRRIPILFFANKMDLRDALTSVKVSQLLCLEDIKDKPWHICASDAIKGEGLQEGVDWLQDQIQSVKT.

The N-myristoyl glycine moiety is linked to residue Gly-2. Residues 24–31 (GLDNSGKT), 69–73 (DMSGQ), and 130–133 (NKMD) each bind GTP.

This sequence belongs to the small GTPase superfamily. Arf family. Interacts with SEC61B, ARL6IP1, ARL6IP2, ARL6IP3, ARL6IP4 ARL6IP5 and ARL6IP6. Interacts (GTP-bound form) with the BBSome a complex that contains BBS1, BBS2, BBS4, BBS5, BBS7, BBS8/TTC8, BBS9 and BBIP10. Interacts (GTP-free form) with IFT27.

Its subcellular location is the cell projection. The protein resides in the cilium membrane. It localises to the cytoplasm. It is found in the cytoskeleton. The protein localises to the cilium axoneme. Its subcellular location is the cilium basal body. In terms of biological role, involved in membrane protein trafficking at the base of the ciliary organelle. Mediates recruitment onto plasma membrane of the BBSome complex which would constitute a coat complex required for sorting of specific membrane proteins to the primary cilia. Together with the BBSome complex and LTZL1, controls SMO ciliary trafficking and contributes to the sonic hedgehog (SHH) pathway regulation. May regulate cilia assembly and disassembly and subsequent ciliary signaling events such as the Wnt signaling cascade. Isoform 2 may be required for proper retinal function and organization. This Bos taurus (Bovine) protein is ADP-ribosylation factor-like protein 6 (ARL6).